The sequence spans 1177 residues: MPYIEKLELKGFKSYGNKKVVIPFSKGFTAIVGANGSGKSNIGDAILFVLGGLSAKAMRASRISDLIFAGSKNEPPAKYAEVAIYFNNEDRGFPIDEDEVVIRRRVYPDGRSSYWLNGRRATRSEILDILTAAMISPDGYNIVLQGDITKFIKMSPLERRLLIDDISGIAEYDSKKEKALEELKQAEENLARVDLLIKEVKKQLDKLEKERNDALRYLDLKDKLEKAKVSLLLGEIKILETQIKEGEKRRAEIEEEIQKIEKEIEKIGKEIVEKVKVLREIEERIEKESGEEAIQITKKIGEVTSKIELTKRNIEVAKEELEDAQRRLAKTKEELRKVLSEIEKSKGAITRWKKRRDALINEIKKKEEERNVLVVKLGEIDKTFGAAREEFDSVVKELEETTRKMYEIEGNIRRLQEEKEKLHSRILFLRAKLPGIKEKINEFKAVVEDKRAEISEIEGKLSTIQAKRIKVEKEIEAKSNELEKVSKELESSERELIAAEAQREVRGNRAAEELKRSGIGGIYGTLAELIKVKDEAYALAIEVALGNRADNVVVEDELVAEKAIKYLKEHKLGRLTFLPLNKIKPKHVDSSVGLPAVDVIEYDQKIENAVKFALGDTVIVNSMEEARPHIGKVRMVTIEGELYERSGAITGGHFRARGLAVDTTKLREKVESLRRRKEALEGELNSLKIELRSLENASFELRIKLSDEKKELELASKDLNRLLEEENAVKEEIEESERKIQEIEQKIENEKSELAKLRGRIQRLERKKEKLKKALENPEARELMEKIRIIDGEISSLKEELSRIESRIESLESRLNEELLPRKASLEEEIEGLVNKINALKNNISENEKALELLNKELEKLKSIEENIKGEIRTLREKRKKLEEDISKLREKKEVLQRKLQELEIEANTLKVRDAQLNAQLEEKKYQLTHYDKNLIKSIKEIPLDLEKVKKEIEKMEEEIRSLEPVNMKAIEDFEIVERRYLELKSKREKLEAEKESIIEFINEIEKEKKNVFMRTFEAISRNFSEIFAKLSPGGSARLILENPEDPFSGGLEIEAKPAGKDVKRIEAMSGGEKALTALAFVFAIQKFKPAPFYLFDEIDAHLDDANVKRVADLIKESSKESQFIVITLRDVMMANADKIIGVSMRDGVSKVVSLSLEKAMKILEEIRKKQGWEHGN.

34–41 (ANGSGKSN) lines the ATP pocket. A coiled-coil region spans residues 167-506 (SGIAEYDSKK…IAAEAQREVR (340 aa)). The 107-residue stretch at 521–627 (GIYGTLAELI…VIVNSMEEAR (107 aa)) folds into the SMC hinge domain. The stretch at 659–1012 (LAVDTTKLRE…NEIEKEKKNV (354 aa)) forms a coiled coil.

Belongs to the SMC family. Homodimer.

It localises to the cytoplasm. Required for chromosome condensation and partitioning. Binds single-stranded but not double-stranded DNA. In Pyrococcus furiosus (strain ATCC 43587 / DSM 3638 / JCM 8422 / Vc1), this protein is Chromosome partition protein Smc.